Consider the following 119-residue polypeptide: Protein TusC (119 aa).

The protein belongs to the DsrF/TusC family. As to quaternary structure, heterohexamer, formed by a dimer of trimers. The hexameric TusBCD complex contains 2 copies each of TusB, TusC and TusD. The TusBCD complex interacts with TusE.

Its subcellular location is the cytoplasm. Part of a sulfur-relay system required for 2-thiolation of 5-methylaminomethyl-2-thiouridine (mnm(5)s(2)U) at tRNA wobble positions. The sequence is that of Protein TusC from Serratia proteamaculans (strain 568).